The primary structure comprises 279 residues: NADPH-dependent 7-cyano-7-deazaguanine reductase (279 aa).

86 to 88 (IES) is a substrate binding site. An NADPH-binding site is contributed by 88-89 (SK). The active-site Thioimide intermediate is the C187. D194 functions as the Proton donor in the catalytic mechanism. 226–227 (HE) lines the substrate pocket. 255–256 (RG) contributes to the NADPH binding site.

This sequence belongs to the GTP cyclohydrolase I family. QueF type 2 subfamily. In terms of assembly, homodimer.

The protein resides in the cytoplasm. It carries out the reaction 7-aminomethyl-7-carbaguanine + 2 NADP(+) = 7-cyano-7-deazaguanine + 2 NADPH + 3 H(+). The protein operates within tRNA modification; tRNA-queuosine biosynthesis. Its function is as follows. Catalyzes the NADPH-dependent reduction of 7-cyano-7-deazaguanine (preQ0) to 7-aminomethyl-7-deazaguanine (preQ1). This Actinobacillus pleuropneumoniae serotype 3 (strain JL03) protein is NADPH-dependent 7-cyano-7-deazaguanine reductase.